The chain runs to 252 residues: 2-succinyl-6-hydroxy-2,4-cyclohexadiene-1-carboxylate synthase (252 aa).

This sequence belongs to the AB hydrolase superfamily. MenH family. In terms of assembly, monomer.

The catalysed reaction is 5-enolpyruvoyl-6-hydroxy-2-succinyl-cyclohex-3-ene-1-carboxylate = (1R,6R)-6-hydroxy-2-succinyl-cyclohexa-2,4-diene-1-carboxylate + pyruvate. It participates in quinol/quinone metabolism; 1,4-dihydroxy-2-naphthoate biosynthesis; 1,4-dihydroxy-2-naphthoate from chorismate: step 3/7. Its pathway is quinol/quinone metabolism; menaquinone biosynthesis. Its function is as follows. Catalyzes a proton abstraction reaction that results in 2,5-elimination of pyruvate from 2-succinyl-5-enolpyruvyl-6-hydroxy-3-cyclohexene-1-carboxylate (SEPHCHC) and the formation of 2-succinyl-6-hydroxy-2,4-cyclohexadiene-1-carboxylate (SHCHC). This is 2-succinyl-6-hydroxy-2,4-cyclohexadiene-1-carboxylate synthase from Shigella sonnei (strain Ss046).